A 129-amino-acid polypeptide reads, in one-letter code: Glycine cleavage system H protein (129 aa).

Residues Ser24–Met106 form the Lipoyl-binding domain. At Lys65 the chain carries N6-lipoyllysine.

The protein belongs to the GcvH family. As to quaternary structure, the glycine cleavage system is composed of four proteins: P, T, L and H. The cofactor is (R)-lipoate.

Its function is as follows. The glycine cleavage system catalyzes the degradation of glycine. The H protein shuttles the methylamine group of glycine from the P protein to the T protein. The polypeptide is Glycine cleavage system H protein (Shewanella oneidensis (strain ATCC 700550 / JCM 31522 / CIP 106686 / LMG 19005 / NCIMB 14063 / MR-1)).